The chain runs to 396 residues: MAESLLIKDIAIVTENEVIKNGYVGINDGKISTVSTERPKEPYSKEIQAPADSVLLPGMIDIHIHGGYGADTMDASFSTLDIMSSRLPEEGTTSFLATTITQEHGNISQALVNAREWKAAEESSLLGAELLGIHLEGPFVSPKRAGAQPKEWIRPSDVELFKKWQQEAGGLIKIVTLAPEEDQHFELIRHLKDESIIASMGHTDADSALLSDAAKAGASHMTHLYNAMSPFHHREPGVIGTALAHDGFVTELIADGIHSHPLAAKLAFLAKGSSKLILITDSMRAKGLKDGVYEFGGQSVTVRGRTALLSDGTLAGSILKMNEGARHMREFTNCSWTDIANITSENAAKQLGIFDRKGSVTVGKDADLVIVSSDCEVILTICRGNIAFISKEADQI.

The Fe cation site is built by histidine 63, histidine 65, and glutamate 136. Residue 147-148 participates in substrate binding; that stretch reads AQ. Fe cation contacts are provided by histidine 202 and histidine 223. Residues 226–227, arginine 234, and 255–258 contribute to the substrate site; these read NA and DGIH. Position 281 (aspartate 281) interacts with Fe cation. Residue aspartate 281 is the Proton donor of the active site. Residue 314 to 316 coordinates substrate; it reads LAG.

This sequence belongs to the metallo-dependent hydrolases superfamily. NagA family. Homodimer. A divalent metal cation serves as cofactor.

It carries out the reaction N-acetyl-D-glucosamine 6-phosphate + H2O = D-glucosamine 6-phosphate + acetate. It participates in amino-sugar metabolism; N-acetylneuraminate degradation; D-fructose 6-phosphate from N-acetylneuraminate: step 4/5. Involved in the first committed step in the biosynthesis of amino-sugar-nucleotides. Catalyzes the hydrolysis of the N-acetyl group of N-acetylglucosamine-6-phosphate (GlcNAc-6-P) to yield glucosamine 6-phosphate and acetate. Essential for growth on N-acetylglucosamine. The chain is N-acetylglucosamine-6-phosphate deacetylase (nagA) from Bacillus subtilis (strain 168).